Reading from the N-terminus, the 434-residue chain is D-amino acid dehydrogenase (434 aa).

Residue 3–17 (VVILGSGVVGVASAW) coordinates FAD.

Belongs to the DadA oxidoreductase family. It depends on FAD as a cofactor.

It catalyses the reaction a D-alpha-amino acid + A + H2O = a 2-oxocarboxylate + AH2 + NH4(+). The protein operates within amino-acid degradation; D-alanine degradation; NH(3) and pyruvate from D-alanine: step 1/1. Its function is as follows. Oxidative deamination of D-amino acids. The protein is D-amino acid dehydrogenase of Yersinia enterocolitica serotype O:8 / biotype 1B (strain NCTC 13174 / 8081).